Consider the following 273-residue polypeptide: 4-hydroxy-3-methylbut-2-enyl diphosphate reductase (273 aa).

C12 is a [4Fe-4S] cluster binding site. 2 residues coordinate (2E)-4-hydroxy-3-methylbut-2-enyl diphosphate: H36 and H70. 2 residues coordinate dimethylallyl diphosphate: H36 and H70. Isopentenyl diphosphate contacts are provided by H36 and H70. C92 contacts [4Fe-4S] cluster. H120 lines the (2E)-4-hydroxy-3-methylbut-2-enyl diphosphate pocket. Residue H120 coordinates dimethylallyl diphosphate. H120 is an isopentenyl diphosphate binding site. E122 serves as the catalytic Proton donor. T157 contacts (2E)-4-hydroxy-3-methylbut-2-enyl diphosphate. C185 is a binding site for [4Fe-4S] cluster. (2E)-4-hydroxy-3-methylbut-2-enyl diphosphate contacts are provided by S213, S214, N215, and S257. Dimethylallyl diphosphate is bound by residues S213, S214, N215, and S257. Isopentenyl diphosphate-binding residues include S213, S214, N215, and S257.

The protein belongs to the IspH family. [4Fe-4S] cluster is required as a cofactor.

The catalysed reaction is isopentenyl diphosphate + 2 oxidized [2Fe-2S]-[ferredoxin] + H2O = (2E)-4-hydroxy-3-methylbut-2-enyl diphosphate + 2 reduced [2Fe-2S]-[ferredoxin] + 2 H(+). It carries out the reaction dimethylallyl diphosphate + 2 oxidized [2Fe-2S]-[ferredoxin] + H2O = (2E)-4-hydroxy-3-methylbut-2-enyl diphosphate + 2 reduced [2Fe-2S]-[ferredoxin] + 2 H(+). Its pathway is isoprenoid biosynthesis; dimethylallyl diphosphate biosynthesis; dimethylallyl diphosphate from (2E)-4-hydroxy-3-methylbutenyl diphosphate: step 1/1. The protein operates within isoprenoid biosynthesis; isopentenyl diphosphate biosynthesis via DXP pathway; isopentenyl diphosphate from 1-deoxy-D-xylulose 5-phosphate: step 6/6. Its function is as follows. Catalyzes the conversion of 1-hydroxy-2-methyl-2-(E)-butenyl 4-diphosphate (HMBPP) into a mixture of isopentenyl diphosphate (IPP) and dimethylallyl diphosphate (DMAPP). Acts in the terminal step of the DOXP/MEP pathway for isoprenoid precursor biosynthesis. The chain is 4-hydroxy-3-methylbut-2-enyl diphosphate reductase from Helicobacter hepaticus (strain ATCC 51449 / 3B1).